The following is a 456-amino-acid chain: Probable glycine dehydrogenase (decarboxylating) subunit 1 (456 aa).

This sequence belongs to the GcvP family. N-terminal subunit subfamily. The glycine cleavage system is composed of four proteins: P, T, L and H. In this organism, the P 'protein' is a heterodimer of two subunits.

It catalyses the reaction N(6)-[(R)-lipoyl]-L-lysyl-[glycine-cleavage complex H protein] + glycine + H(+) = N(6)-[(R)-S(8)-aminomethyldihydrolipoyl]-L-lysyl-[glycine-cleavage complex H protein] + CO2. The glycine cleavage system catalyzes the degradation of glycine. The P protein binds the alpha-amino group of glycine through its pyridoxal phosphate cofactor; CO(2) is released and the remaining methylamine moiety is then transferred to the lipoamide cofactor of the H protein. The protein is Probable glycine dehydrogenase (decarboxylating) subunit 1 of Legionella pneumophila (strain Lens).